Reading from the N-terminus, the 228-residue chain is tRNA (carboxymethyluridine(34)-5-O)-methyltransferase (228 aa).

The protein resides in the cytoplasm. The protein localises to the nucleus. The catalysed reaction is 5-(carboxymethyl)uridine(34) in tRNA + S-adenosyl-L-methionine = 5-(2-methoxy-2-oxoethyl)uridine(34) in tRNA + S-adenosyl-L-homocysteine. In terms of biological role, required for the methylation of the wobble bases at position 34 in tRNA. Appears to have a role in stress-response. The sequence is that of tRNA (carboxymethyluridine(34)-5-O)-methyltransferase (trm9) from Schizosaccharomyces pombe (strain 972 / ATCC 24843) (Fission yeast).